The primary structure comprises 393 residues: MTYEVLEQINAMADDIFAEGIEAERIGRVADDTAKKMKAIGSIRMLQPKEHGGMEAHPREFAETVMRMASLNPSAGWVHGIVGVHPWQLAFADPKVQQEIWGSDPDTWMASPYMPGGMCIPTDGGYKFSGRWQFSSGTDHCDWAFLGAMACDKDGNMEMPPRMLHVIIPRTDYEIIEDSWDVMGLRGTGSKDLVVKDAYVPDYRVMDCDEVIDGTAVRKYGRTETLYLMPWSNMFPLGITAATIGICEGMLFHANEYQAGRINAQGTAVKDDPYTLFAIGQATADIRAARDTLLANVDRMWDRVDAGKEVTFEQRAEGRQTQVQAAWRAINAIDQVYPRCGGNALRMDKPLQRFWRDAHAGQHHAIHVPGTVFHAASLSRLGADPQGPLRAMI.

Its function is as follows. Involved in pigment production acting as a hydroxylase that transforms indole to indoxyl, resulting in the formation of indigo. In Rhodococcus erythropolis (Arthrobacter picolinophilus), this protein is Pigment production hydroxylase.